The sequence spans 391 residues: Digeranylgeranylglycerophospholipid reductase (391 aa).

Positions 13, 32, 43, 44, 46, 97, 121, 277, 289, and 290 each coordinate FAD.

This sequence belongs to the geranylgeranyl reductase family. DGGGPL reductase subfamily. It depends on FAD as a cofactor.

It carries out the reaction a 2,3-bis-O-phytanyl-sn-glycerol 1-phospholipid + 8 oxidized 2[4Fe-4S]-[ferredoxin] = a 2,3-bis-O-(geranylgeranyl)-sn-glycerol 1-phospholipid + 8 reduced 2[4Fe-4S]-[ferredoxin] + 16 H(+). The enzyme catalyses 2,3-bis-O-(phytanyl)-sn-glycerol 1-phosphate + 8 oxidized 2[4Fe-4S]-[ferredoxin] = 2,3-bis-O-(geranylgeranyl)-sn-glycerol 1-phosphate + 8 reduced 2[4Fe-4S]-[ferredoxin] + 16 H(+). It catalyses the reaction a 2,3-bis-O-phytanyl-sn-glycerol 1-phospholipid + 8 A = a 2,3-bis-O-(geranylgeranyl)-sn-glycerol 1-phospholipid + 8 AH2. The catalysed reaction is CDP-2,3-bis-O-(geranylgeranyl)-sn-glycerol + 8 AH2 = CDP-2,3-bis-O-(phytanyl)-sn-glycerol + 8 A. It carries out the reaction archaetidylserine + 8 AH2 = 2,3-bis-O-phytanyl-sn-glycero-3-phospho-L-serine + 8 A. The protein operates within membrane lipid metabolism; glycerophospholipid metabolism. In terms of biological role, is involved in the reduction of 2,3-digeranylgeranylglycerophospholipids (unsaturated archaeols) into 2,3-diphytanylglycerophospholipids (saturated archaeols) in the biosynthesis of archaeal membrane lipids. Catalyzes the formation of archaetidic acid (2,3-di-O-phytanyl-sn-glyceryl phosphate) from 2,3-di-O-geranylgeranylglyceryl phosphate (DGGGP) via the hydrogenation of each double bond of the isoprenoid chains. Is also probably able to reduce double bonds of geranyl groups in CDP-2,3-bis-O-(geranylgeranyl)-sn-glycerol and archaetidylserine, thus acting at various stages in the biosynthesis of archaeal membrane lipids. In Methanothrix thermoacetophila (strain DSM 6194 / JCM 14653 / NBRC 101360 / PT) (Methanosaeta thermophila), this protein is Digeranylgeranylglycerophospholipid reductase.